The sequence spans 66 residues: U-limacoditoxin(59)-Dv128 (66 aa).

The first 20 residues, 1–20 (MRHLLVLLLICLSVIAMAQA), serve as a signal peptide directing secretion. The segment at 21-66 (TFGGGLGGAVGGRRRRDIGGGLGGAVGGRRRRDIGGGLGGAVGGKS) is 3 X 16 AA tandem repeats of [FI]-G-G-G-L-G-G-A-V-G-G-R-R-R-R-D. 2 consecutive repeat copies span residues 22 to 37 (FGGG…RRRD) and 38 to 53 (IGGG…RRRD). Glycine 31 is subject to Glycine amide. The propeptide occupies 33–37 (RRRRD). Position 47 is a glycine amide (glycine 47). The propeptide occupies 49-53 (RRRRD). A 3; half-length repeat occupies 54-64 (IGGGLGGAVGG).

This sequence belongs to the limacoditoxin-59 family. Expressed by the venom secretory cell of the spine. The spine is a cuticular structure containing a single large nucleated venom-secreting cell at its base. It is an independent unit capable of producing, storing and injecting venom. On the back of D.vulnerans caterpillars, spines are grouped together by 50 to 100 to form scoli, of which there are eight in D.vulnerans.

The protein localises to the secreted. Functionally, probable toxin. This is U-limacoditoxin(59)-Dv128 from Doratifera vulnerans (Mottled cup moth).